Reading from the N-terminus, the 275-residue chain is Chlorophyll a-b binding protein 3, chloroplastic (275 aa).

Position 58 (Trp58) interacts with chlorophyll b. Positions 78, 84, and 102 each coordinate chlorophyll a. Chlorophyll b-binding residues include Arg107, Ile142, Glu169, and Arg172. Positions 226, 227, 230, 232, 244, and 259 each coordinate chlorophyll a. A helical membrane pass occupies residues 233-253 (LAMLAILGYFIQGLVTGVGPY).

Belongs to the light-harvesting chlorophyll a/b-binding (LHC) protein family. In terms of assembly, the LHC complex consists of chlorophyll a-b binding proteins. The cofactor is Binds at least 14 chlorophylls (8 Chl-a and 6 Chl-b) and carotenoids such as lutein and neoxanthin.. Photoregulated by reversible phosphorylation of its threonine residues.

Its subcellular location is the plastid. The protein localises to the chloroplast thylakoid membrane. Its function is as follows. The light-harvesting complex (LHC) functions as a light receptor, it captures and delivers excitation energy to photosystems with which it is closely associated. Functionally, may channel protons produced in the catalytic Mn center of water oxidation into the thylakoid lumen. The polypeptide is Chlorophyll a-b binding protein 3, chloroplastic (Pisum sativum (Garden pea)).